The following is a 142-amino-acid chain: Midkine (142 aa).

The first 21 residues, 1-21, serve as a signal peptide directing secretion; sequence MELRAFCVILLITFLAVSSQA. 5 disulfides stabilise this stretch: Cys36/Cys60, Cys44/Cys69, Cys51/Cys73, Cys83/Cys115, and Cys93/Cys125.

This sequence belongs to the pleiotrophin family.

It is found in the secreted. Functionally, secreted protein that functions as a cytokine and growth factor and mediates its signal through cell-surface proteoglycan and non-proteoglycan receptors. Binds cell-surface proteoglycan receptors via their chondroitin sulfate (CS) groups. Thereby regulates many processes like inflammatory response, cell proliferation, cell adhesion, cell growth, cell survival, tissue regeneration, cell differentiation and cell migration. Inhibits mesoderm formation and promotes neural formation during development. Plays a role in development of the neuromuscular junction (NMJ). Has antibacterial activity against both Gram-positive and Gram-negative bacteria. The protein is Midkine of Xenopus tropicalis (Western clawed frog).